We begin with the raw amino-acid sequence, 443 residues long: Methyl-coenzyme M reductase I subunit beta (443 aa).

Residue Y367 coordinates coenzyme M. Residue G369 coordinates coenzyme B.

The protein belongs to the methyl-coenzyme M reductase beta subunit family. In terms of assembly, MCR is a hexamer of two alpha, two beta, and two gamma chains, forming a dimer of heterotrimers. It depends on coenzyme F430 as a cofactor.

The protein localises to the cytoplasm. The enzyme catalyses coenzyme B + methyl-coenzyme M = methane + coenzyme M-coenzyme B heterodisulfide. The protein operates within one-carbon metabolism; methyl-coenzyme M reduction; methane from methyl-coenzyme M: step 1/1. With respect to regulation, methyl-coenzyme M reductase activity is inhibited by 3-nitrooxypropanol (3-NOP) in vitro and in vivo, by oxidation of its active site Ni(I), which stops both growth and methanogenesis. Is also inhibited by the reaction product CoM-S-S-CoB. Component of the methyl-coenzyme M reductase (MCR) I that catalyzes the reductive cleavage of methyl-coenzyme M (CoM-S-CH3 or 2-(methylthio)ethanesulfonate) using coenzyme B (CoB or 7-mercaptoheptanoylthreonine phosphate) as reductant which results in the production of methane and the mixed heterodisulfide of CoB and CoM (CoM-S-S-CoB). This is the final step in methanogenesis. Neither N-6-mercaptohexanoylthreonine phosphate (H-S-HxoTP) nor N-8-mercaptooctanoylthreonine phosphate (H-SOcoTP) nor any other thiol compound such as CoA or CoM can substitute for CoB as the electron donor. The chain is Methyl-coenzyme M reductase I subunit beta (mcrB) from Methanothermobacter marburgensis (strain ATCC BAA-927 / DSM 2133 / JCM 14651 / NBRC 100331 / OCM 82 / Marburg) (Methanobacterium thermoautotrophicum).